The sequence spans 416 residues: Enterobactin exporter EntS (416 aa).

Topologically, residues 1–21 (MNKQSWLLNLSLLKTHPAFRA) are cytoplasmic. The helical transmembrane segment at 22-42 (VFLARFISIVSLGLLGVAVPV) threads the bilayer. At 43-55 (QIQMMTHSTWQVG) the chain is on the periplasmic side. The helical transmembrane segment at 56–76 (LSVTLTGGAMFVGLMVGGVLA) threads the bilayer. The Cytoplasmic portion of the chain corresponds to 77–83 (DRYERKK). The chain crosses the membrane as a helical span at residues 84–104 (VILLARGTCGIGFIGLCLNAL). Topologically, residues 105–109 (LPEPS) are periplasmic. The chain crosses the membrane as a helical span at residues 110–130 (LLAIYLLGLWDGFFASLGVTA). The Cytoplasmic portion of the chain corresponds to 131 to 156 (LLAATPALVGRENLMQAGAITMLTVR). The chain crosses the membrane as a helical span at residues 157-177 (LGSVISPMIGGLLLATGGVAW). Residue Asn-178 is a topological domain, periplasmic. The chain crosses the membrane as a helical span at residues 179–199 (YGLAAAGTFITLLPLLSLPAL). Residues 200–218 (PPPPQPREHPLKSLLAGFR) are Cytoplasmic-facing. A helical transmembrane segment spans residues 219 to 239 (FLLASPLVGGIALLGGLLTMA). Residues 240 to 256 (SAVRVLYPALADNWQMS) are Periplasmic-facing. A helical transmembrane segment spans residues 257–277 (AAQIGFLYAAIPLGAAIGALT). Residues 278–287 (SGKLAHSVRP) lie on the Cytoplasmic side of the membrane. A helical membrane pass occupies residues 288–307 (GLLMLLSTLGAFLAIGLFGL). The Periplasmic segment spans residues 308–313 (MPMWIL). Residues 314–336 (GVVCLALFGWLSAVSSLLQYTML) traverse the membrane as a helical segment. The Cytoplasmic portion of the chain corresponds to 337–356 (QTQTPEAMLGRINGLWTAQN). The helical transmembrane segment at 357–377 (VTGDAIGAALLGGLGAMMTPV) threads the bilayer. A topological domain (periplasmic) is located at residue Ala-378. A helical membrane pass occupies residues 379-399 (SASASGFGLLIIGVLLLLVLV). Residues 400-416 (ELRRFRQTPPQVTASDS) lie on the Cytoplasmic side of the membrane.

The protein belongs to the major facilitator superfamily. EntS (TC 2.A.1.38) family.

The protein resides in the cell inner membrane. Component of an export pathway for enterobactin. In Escherichia coli O6:H1 (strain CFT073 / ATCC 700928 / UPEC), this protein is Enterobactin exporter EntS.